The chain runs to 391 residues: NADH-quinone oxidoreductase subunit D (391 aa).

This sequence belongs to the complex I 49 kDa subunit family. In terms of assembly, NDH-1 is composed of 14 different subunits. Subunits NuoB, C, D, E, F, and G constitute the peripheral sector of the complex.

It is found in the cell inner membrane. It catalyses the reaction a quinone + NADH + 5 H(+)(in) = a quinol + NAD(+) + 4 H(+)(out). Its function is as follows. NDH-1 shuttles electrons from NADH, via FMN and iron-sulfur (Fe-S) centers, to quinones in the respiratory chain. The immediate electron acceptor for the enzyme in this species is believed to be ubiquinone. Couples the redox reaction to proton translocation (for every two electrons transferred, four hydrogen ions are translocated across the cytoplasmic membrane), and thus conserves the redox energy in a proton gradient. This chain is NADH-quinone oxidoreductase subunit D, found in Rickettsia canadensis (strain McKiel).